The following is a 400-amino-acid chain: Poly(A) polymerase type 3 (400 aa).

Residues 97–99 (FGS), Thr-106, 110–112 (DID), Asp-164, Lys-225, Tyr-234, and 243–244 (GV) each bind ATP. Residues Asp-110, Asp-112, and Asp-164 each contribute to the Mg(2+) site. The short motif at 382 to 390 (GEIINKNKK) is the Nuclear localization signal element.

It belongs to the poly(A) polymerase family. Monomer. It depends on Mg(2+) as a cofactor. Mn(2+) serves as cofactor.

The protein localises to the nucleus. It carries out the reaction RNA(n) + ATP = RNA(n)-3'-adenine ribonucleotide + diphosphate. Polymerase that creates the 3'-poly(A) tail of mRNA's. May acquire specificity through interaction with a cleavage and polyadenylation factor (CPSF). In Xenopus laevis (African clawed frog), this protein is Poly(A) polymerase type 3.